The primary structure comprises 445 residues: uncharacterized protein (445 aa).

Position 66 (His-66) interacts with Zn(2+). Glu-69 serves as the catalytic Proton acceptor. The Zn(2+) site is built by His-70 and Glu-146. The disordered stretch occupies residues 232 to 251 (GRQSAPPRKSTGRINGGPAL).

Belongs to the peptidase M16 family. It depends on Zn(2+) as a cofactor.

This is an uncharacterized protein from Mycobacterium leprae (strain TN).